We begin with the raw amino-acid sequence, 208 residues long: Outer-membrane lipoprotein carrier protein (208 aa).

A signal peptide spans 1–22 (MKNLLCAVMLTSPLLYSTAVFA).

It belongs to the LolA family. In terms of assembly, monomer.

It localises to the periplasm. Participates in the translocation of lipoproteins from the inner membrane to the outer membrane. Only forms a complex with a lipoprotein if the residue after the N-terminal Cys is not an aspartate (The Asp acts as a targeting signal to indicate that the lipoprotein should stay in the inner membrane). This chain is Outer-membrane lipoprotein carrier protein, found in Shewanella sp. (strain W3-18-1).